Consider the following 715-residue polypeptide: Probable ubiquitin thioesterase DG1039 (715 aa).

A coiled-coil region spans residues 86–302 (KSRNEIKRKA…NNQTDDKLDN (217 aa)). A compositionally biased stretch (basic and acidic residues) spans 287-302 (NKKLENNNQTDDKLDN). Disordered regions lie at residues 287-367 (NKKL…YNST), 398-450 (QYKQ…QQQY), and 502-527 (LAQS…SSEA). Residues 339 to 349 (TTAQLPLSITQ) are compositionally biased toward polar residues. Residues 398-409 (QYKQQQQQQPIQ) are compositionally biased toward low complexity. Composition is skewed to polar residues over residues 410–427 (SPTN…NNYN) and 502–525 (LAQS…IDSS). In terms of domain architecture, MPN spans 537 to 666 (IIVHGEVFQE…IFRLTDPPGL (130 aa)). The Zn(2+) site is built by histidine 615, histidine 617, aspartate 628, histidine 630, cysteine 672, histidine 678, and histidine 680. The short motif at 615–628 (HTHPTQDCFLSAVD) is the JAMM motif element.

It belongs to the peptidase M67C family. Requires Zn(2+) as cofactor.

Its function is as follows. May be a zinc metalloprotease that specifically cleaves ubiquitin chains. This Dictyostelium discoideum (Social amoeba) protein is Probable ubiquitin thioesterase DG1039 (DG1039).